The sequence spans 451 residues: Adenylyltransferase and sulfurtransferase MOCS3 (451 aa).

Thr-60 bears the Phosphothreonine mark. ATP is bound by residues Gly-99, Asp-120, 127–131 (SNFHR), Lys-144, and 188–189 (DN). Residues Cys-229 and Cys-232 each coordinate Zn(2+). The Glycyl thioester intermediate; for adenylyltransferase activity role is filled by Cys-246. Zn(2+) contacts are provided by Cys-304 and Cys-307. Residues 353–449 (QQQPHLLIDV…WTHKVDPSFP (97 aa)) enclose the Rhodanese domain. The active-site Cysteine persulfide intermediate; for sulfurtransferase activity is Cys-408.

This sequence in the N-terminal section; belongs to the HesA/MoeB/ThiF family. UBA4 subfamily. Zn(2+) is required as a cofactor.

Its subcellular location is the cytoplasm. It localises to the cytosol. The catalysed reaction is [molybdopterin-synthase sulfur-carrier protein]-C-terminal Gly-Gly + ATP + H(+) = [molybdopterin-synthase sulfur-carrier protein]-C-terminal Gly-Gly-AMP + diphosphate. The enzyme catalyses [molybdopterin-synthase sulfur-carrier protein]-C-terminal Gly-Gly-AMP + S-sulfanyl-L-cysteinyl-[cysteine desulfurase] + AH2 = [molybdopterin-synthase sulfur-carrier protein]-C-terminal-Gly-aminoethanethioate + L-cysteinyl-[cysteine desulfurase] + A + AMP + 2 H(+). The protein operates within tRNA modification; 5-methoxycarbonylmethyl-2-thiouridine-tRNA biosynthesis. It functions in the pathway cofactor biosynthesis; molybdopterin biosynthesis. Plays a central role in 2-thiolation of mcm(5)S(2)U at tRNA wobble positions of cytosolic tRNA(Lys), tRNA(Glu) and tRNA(Gln). Also essential during biosynthesis of the molybdenum cofactor. Acts by mediating the C-terminal thiocarboxylation of sulfur carriers URM1 and MOCS2A. Its N-terminus first activates URM1 and MOCS2A as acyl-adenylates (-COAMP), then the persulfide sulfur on the catalytic cysteine is transferred to URM1 and MOCS2A to form thiocarboxylation (-COSH) of their C-terminus. The reaction probably involves hydrogen sulfide that is generated from the persulfide intermediate and that acts as a nucleophile towards URM1 and MOCS2A. Subsequently, a transient disulfide bond is formed. Does not use thiosulfate as sulfur donor; NFS1 probably acting as a sulfur donor for thiocarboxylation reactions. The polypeptide is Adenylyltransferase and sulfurtransferase MOCS3 (Drosophila ananassae (Fruit fly)).